The primary structure comprises 11197 residues: Nonribosomal peptide synthetase 5 (11197 aa).

The segment at 19–413 (AQRARKQPDA…DGTLQVVGHK (395 aa)) is adenylation (A) domain 1. Positions 426–452 (HASSSASSVGETPGVTGPISTPMGDSV) are disordered. Residues 690-897 (KQLRQFCQEQ…LMDESMKQQI (208 aa)) form a condensation (C) domain 1 region. The tract at residues 918–1310 (DAAQDYPDAP…GRHDGQLKVR (393 aa)) is adenylation (A) domain 2. In terms of domain architecture, Carrier 1 spans 1446 to 1522 (ADRSPVHMML…DMANNIAISE (77 aa)). Serine 1483 carries the O-(pantetheine 4'-phosphoryl)serine modification. Residues 1952–2380 (VEDVYPCSPV…SDISLMDPLS (429 aa)) are condensation (C) domain 2. The interval 2406-2805 (VARIEPDKMA…QRKDTQIKIR (400 aa)) is adenylation (A) domain 3. The region spanning 2945–3021 (DSLTSTEVTI…SLAAFVDYDS (77 aa)) is the Carrier 2 domain. Serine 2982 is subject to O-(pantetheine 4'-phosphoryl)serine. The tract at residues 3041-3481 (EESFALSPIQ…TSTMKSEFTL (441 aa)) is epimerase (E) domain 1. The interval 3515–3957 (EEIFPCSPMQ…VSPETRCELD (443 aa)) is condensation (C) domain 3. The interval 3976-4371 (FEQQVEKIPD…RRRDNQVKVR (396 aa)) is adenylation (A) domain 4. The 77-residue stretch at 4508 to 4584 (RKLTPMEQQL…ELANHARFKA (77 aa)) folds into the Carrier 3 domain. Serine 4545 is modified (O-(pantetheine 4'-phosphoryl)serine). An epimerase (E) domain 2 region spans residues 4603–5022 (FPLLPIQRMF…LNEYTAALRS (420 aa)). A condensation (C) domain 4 region spans residues 5069-5501 (ESIYPCSPLQ…LVGDSERQGL (433 aa)). An adenylation (A) domain 5 region spans residues 5521–5918 (EAQVKAIPDN…RRKDTQVKVR (398 aa)). The region spanning 6068 to 6141 (SEAEDIIRAV…ALAQFVSQST (74 aa)) is the Carrier 4 domain. Residue serine 6102 is modified to O-(pantetheine 4'-phosphoryl)serine. Residues 6162–6512 (FSLSPIQQMF…MEILFNYFGQ (351 aa)) form an epimerase (E) domain 3 region. The condensation (C) domain 5 stretch occupies residues 6636–7076 (EEIFPCSPIQ…LVGAETRREM (441 aa)). The adenylation (A) domain 6 stretch occupies residues 7097–7491 (ERNSQAMPDR…RRRDNQVKVR (395 aa)). The 77-residue stretch at 7636 to 7712 (KPKTKMEEHF…DLAGRSRFKN (77 aa)) folds into the Carrier 5 domain. Serine 7673 bears the O-(pantetheine 4'-phosphoryl)serine mark. Residues 7733-8162 (ALLPIQRLFF…KYMLETLASQ (430 aa)) are epimerase (E) domain 4. The interval 8205 to 8638 (EASYPCSPLQ…MLGDSGRKRI (434 aa)) is condensation (C) domain 6. The tract at residues 8660 to 8832 (EAHVKESPNR…DHRATATEIV (173 aa)) is adenylation (A) domain 7. The Carrier 6 domain maps to 9173-9248 (SAQTAVVQII…AMAAKAQQIG (76 aa)). Serine 9209 is modified (O-(pantetheine 4'-phosphoryl)serine). The segment at 9565-9683 (RVKDMRRAIP…LHEVVSALQK (119 aa)) is epimerase (E) domain 5. The interval 9721–10116 (VEDVYPTSPM…LVPAKHMEQL (396 aa)) is condensation (C) domain 7. Residues 10136–10529 (DDMVRSTPTA…VGRKDTQIKI (394 aa)) are adenylation (A) domain 8. Residues 10663 to 10749 (LDSSDYVAMQ…TLAVTIKADM (87 aa)) enclose the Carrier 7 domain. Serine 10708 carries the O-(pantetheine 4'-phosphoryl)serine modification. Residues 10806–11104 (NFLVTGSTGF…SLRPMSGPEW (299 aa)) form a thioesterase (TE) domain region.

This sequence belongs to the NRP synthetase family.

It functions in the pathway secondary metabolite biosynthesis. In terms of biological role, nonribosomal peptide synthetase; part of the Fg3_54/C64 gene cluster that mediates the biosynthesis of the octapeptide fusaoctaxin A, a virulence factor that is required for cell-to-cell invasiveness of plant host. The 2 nonribosomal peptide synthetases NRPS9 and NRPS5 form an assembly line which likely utilizes GABA as a starter unit (loaded on the unique module M1 of NRPS9) and sequentially incorporates seven extender units composed of the residues L-Ala, L-allo-Ile, L-Ser, L-Val, L-Ser, L-Leu and L-Leu, respectively. During the process, each of the residues that are tethered on modules M3-M7 of NRPS5 containing an E domain can undergo an epimerization reaction to produce a D-configuration before the transpeptidation reaction occurs. The elongation of the peptidyl chain might be terminated by module M8-mediated L-Leu incorporation, followed by R domain-catalyzed 4 electron reduction to release the resulting octapeptide from the assembly line as an alcohol. Fusaoctaxin A is cleaved by the cluster specific ABC transporter FGM5 to the pentapeptide fusapentaxin A and the tripeptide fusatrixin A. The other enzymes from the cluster, FGM1, FGM2, FGM3 and FGM9 seem not to be involved in the biosynthesis of fusaoctaxin A and their functions have still to be determined. This is Nonribosomal peptide synthetase 5 from Gibberella zeae (strain ATCC MYA-4620 / CBS 123657 / FGSC 9075 / NRRL 31084 / PH-1) (Wheat head blight fungus).